Here is a 354-residue protein sequence, read N- to C-terminus: Protein NDH-DEPENDENT CYCLIC ELECTRON FLOW 5 (354 aa).

The transit peptide at 1-49 directs the protein to the chloroplast; the sequence is MALVHYMNVSRSTFPLSRSSKINLSSSFASLPLQFHKNIKRLESSVPPS.

Its subcellular location is the plastid. It localises to the chloroplast thylakoid membrane. Functionally, required for both formation and activity of the chloroplast NAD(P)H dehydrogenase (NDH) complex of the photosynthetic electron transport chain. May function in assembly or stabilization of the NDH complex. The polypeptide is Protein NDH-DEPENDENT CYCLIC ELECTRON FLOW 5 (Arabidopsis thaliana (Mouse-ear cress)).